The following is a 347-amino-acid chain: GMP reductase (347 aa).

108–131 (ADFEKTVQILALNPALNFVCIDVA) is a binding site for NADP(+). Residues Gly-181 and Gly-183 each coordinate K(+). The Thioimidate intermediate role is filled by Cys-186. 216-239 (IVSDGGCTMPGDVAKAFGGGADFV) provides a ligand contact to NADP(+).

Belongs to the IMPDH/GMPR family. GuaC type 1 subfamily. As to quaternary structure, homotetramer.

The catalysed reaction is IMP + NH4(+) + NADP(+) = GMP + NADPH + 2 H(+). Its function is as follows. Catalyzes the irreversible NADPH-dependent deamination of GMP to IMP. It functions in the conversion of nucleobase, nucleoside and nucleotide derivatives of G to A nucleotides, and in maintaining the intracellular balance of A and G nucleotides. The chain is GMP reductase from Salmonella paratyphi C (strain RKS4594).